Reading from the N-terminus, the 156-residue chain is Small ribosomal subunit protein uS7 (156 aa).

It belongs to the universal ribosomal protein uS7 family. Part of the 30S ribosomal subunit. Contacts proteins S9 and S11.

Functionally, one of the primary rRNA binding proteins, it binds directly to 16S rRNA where it nucleates assembly of the head domain of the 30S subunit. Is located at the subunit interface close to the decoding center, probably blocks exit of the E-site tRNA. In Alkaliphilus metalliredigens (strain QYMF), this protein is Small ribosomal subunit protein uS7.